A 384-amino-acid chain; its full sequence is Small ribosomal subunit protein mS31 (384 aa).

The N-terminal 54 residues, 1–54 (MLHRIPAFLRPRPFSGLPLSCGNRDVSVAVLPAAQSGAVRTENNIQRHFCTSRS), are a transit peptide targeting the mitochondrion. Residues 101-136 (TANVKTPKPRGRKPSASLEATVDRLQKAPEDPPKKR) are disordered. A compositionally biased stretch (basic and acidic residues) spans 121-136 (TVDRLQKAPEDPPKKR).

It belongs to the mitochondrion-specific ribosomal protein mS31 family. In terms of assembly, component of the mitochondrial ribosome small subunit (28S) which comprises a 12S rRNA and about 30 distinct proteins.

The protein localises to the mitochondrion. This is Small ribosomal subunit protein mS31 (Mrps31) from Mus musculus (Mouse).